Reading from the N-terminus, the 170-residue chain is Adenine phosphoribosyltransferase (170 aa).

Belongs to the purine/pyrimidine phosphoribosyltransferase family. As to quaternary structure, homodimer.

The protein localises to the cytoplasm. The enzyme catalyses AMP + diphosphate = 5-phospho-alpha-D-ribose 1-diphosphate + adenine. Its pathway is purine metabolism; AMP biosynthesis via salvage pathway; AMP from adenine: step 1/1. Functionally, catalyzes a salvage reaction resulting in the formation of AMP, that is energically less costly than de novo synthesis. In Acholeplasma laidlawii (strain PG-8A), this protein is Adenine phosphoribosyltransferase.